A 119-amino-acid chain; its full sequence is Large ribosomal subunit protein bL20 (119 aa).

Belongs to the bacterial ribosomal protein bL20 family.

Its function is as follows. Binds directly to 23S ribosomal RNA and is necessary for the in vitro assembly process of the 50S ribosomal subunit. It is not involved in the protein synthesizing functions of that subunit. This is Large ribosomal subunit protein bL20 from Stenotrophomonas maltophilia (strain K279a).